We begin with the raw amino-acid sequence, 61 residues long: Large ribosomal subunit protein uL30 (61 aa).

This sequence belongs to the universal ribosomal protein uL30 family. In terms of assembly, part of the 50S ribosomal subunit.

The chain is Large ribosomal subunit protein uL30 from Rhizorhabdus wittichii (strain DSM 6014 / CCUG 31198 / JCM 15750 / NBRC 105917 / EY 4224 / RW1) (Sphingomonas wittichii).